A 198-amino-acid polypeptide reads, in one-letter code: HTH-type transcriptional regulator BetI (198 aa).

One can recognise an HTH tetR-type domain in the interval 8-68; that stretch reads PIRRQQLIDA…ATMRYLISHL (61 aa). Positions 31-50 form a DNA-binding region, H-T-H motif; sequence TIAQIARRAGVSNGIISHYF.

It participates in amine and polyamine biosynthesis; betaine biosynthesis via choline pathway [regulation]. In terms of biological role, repressor involved in the biosynthesis of the osmoprotectant glycine betaine. It represses transcription of the choline transporter BetT and the genes of BetAB involved in the synthesis of glycine betaine. The protein is HTH-type transcriptional regulator BetI of Serratia proteamaculans (strain 568).